Here is a 398-residue protein sequence, read N- to C-terminus: Cell division protein FtsZ (398 aa).

Residues 21–25, 108–110, glutamate 139, arginine 143, and aspartate 187 contribute to the GTP site; these read GGGGN and GTG.

It belongs to the FtsZ family. Homodimer. Polymerizes to form a dynamic ring structure in a strictly GTP-dependent manner. Interacts directly with several other division proteins.

The protein resides in the cytoplasm. Essential cell division protein that forms a contractile ring structure (Z ring) at the future cell division site. The regulation of the ring assembly controls the timing and the location of cell division. One of the functions of the FtsZ ring is to recruit other cell division proteins to the septum to produce a new cell wall between the dividing cells. Binds GTP and shows GTPase activity. In Pseudomonas putida (strain ATCC 47054 / DSM 6125 / CFBP 8728 / NCIMB 11950 / KT2440), this protein is Cell division protein FtsZ.